The primary structure comprises 118 residues: NLVQFSYLIQCANTGKRASYHYADYGCYCGAGGSGTPVDELDRCCKIHDNCYGQAEKMGCYPKLTMYNYYCGTQSPTCDNKTGCQRYVCACDLEAAKCFARSPYNNKNYNIDTSKRCK.

7 disulfide bridges follow: Cys11/Cys71, Cys27/Cys117, Cys29/Cys45, Cys44/Cys98, Cys51/Cys91, Cys60/Cys84, and Cys78/Cys89. Ca(2+) contacts are provided by Tyr28, Gly30, and Gly32. His48 is a catalytic residue. Asp49 provides a ligand contact to Ca(2+). Asp92 is an active-site residue.

This sequence belongs to the phospholipase A2 family. Group I subfamily. D49 sub-subfamily. As to quaternary structure, monomer. Ca(2+) serves as cofactor. As to expression, expressed by the venom gland.

It is found in the secreted. It catalyses the reaction a 1,2-diacyl-sn-glycero-3-phosphocholine + H2O = a 1-acyl-sn-glycero-3-phosphocholine + a fatty acid + H(+). PLA2 catalyzes the calcium-dependent hydrolysis of the 2-acyl groups in 3-sn-phosphoglycerides. The polypeptide is Basic phospholipase A2 4 (Laticauda semifasciata (Black-banded sea krait)).